A 113-amino-acid polypeptide reads, in one-letter code: Putative glycerol transporter Lin0367 (113 aa).

Helical transmembrane passes span 3-23 (IGIALATIAGGFLFPFAIRMM), 30-50 (EWGAIGGWMAAAFIVGTVWTI), 63-83 (GTVWVDMAVAAGIGVFTASLL), and 92-112 (VVNLAAAVVGGVLGGFLLSLF).

It is found in the membrane. Functionally, could be involved in the glycerol uptake either via facilitated diffusion or active transport. The chain is Putative glycerol transporter Lin0367 from Listeria innocua serovar 6a (strain ATCC BAA-680 / CLIP 11262).